The following is a 619-amino-acid chain: DNA mismatch repair protein MutL (619 aa).

The protein belongs to the DNA mismatch repair MutL/HexB family.

In terms of biological role, this protein is involved in the repair of mismatches in DNA. It is required for dam-dependent methyl-directed DNA mismatch repair. May act as a 'molecular matchmaker', a protein that promotes the formation of a stable complex between two or more DNA-binding proteins in an ATP-dependent manner without itself being part of a final effector complex. The chain is DNA mismatch repair protein MutL from Xylella fastidiosa (strain M23).